The following is a 699-amino-acid chain: DNA ligase (699 aa).

Residues 1 to 20 (MTVQKPIESLSPAQAKREHR) are disordered. NAD(+) is bound by residues 43–47 (DAEYD), 92–93 (SL), and glutamate 126. Catalysis depends on lysine 128, which acts as the N6-AMP-lysine intermediate. Residues arginine 149, glutamate 185, lysine 301, and lysine 325 each coordinate NAD(+). The Zn(2+) site is built by cysteine 419, cysteine 422, cysteine 443, and cysteine 449. One can recognise a BRCT domain in the interval 621–699 (AKESPVAGKT…EEDWLKLVGE (79 aa)).

The protein belongs to the NAD-dependent DNA ligase family. LigA subfamily. Mg(2+) is required as a cofactor. Requires Mn(2+) as cofactor.

The enzyme catalyses NAD(+) + (deoxyribonucleotide)n-3'-hydroxyl + 5'-phospho-(deoxyribonucleotide)m = (deoxyribonucleotide)n+m + AMP + beta-nicotinamide D-nucleotide.. Functionally, DNA ligase that catalyzes the formation of phosphodiester linkages between 5'-phosphoryl and 3'-hydroxyl groups in double-stranded DNA using NAD as a coenzyme and as the energy source for the reaction. It is essential for DNA replication and repair of damaged DNA. This chain is DNA ligase, found in Beijerinckia indica subsp. indica (strain ATCC 9039 / DSM 1715 / NCIMB 8712).